We begin with the raw amino-acid sequence, 286 residues long: Protease HtpX homolog (286 aa).

A run of 2 helical transmembrane segments spans residues threonine 7–glycine 27 and serine 29–serine 49. Histidine 131 lines the Zn(2+) pocket. The active site involves glutamate 132. Residue histidine 135 coordinates Zn(2+). 2 helical membrane-spanning segments follow: residues leucine 146–glycine 166 and isoleucine 177–isoleucine 197. Glutamate 202 provides a ligand contact to Zn(2+).

This sequence belongs to the peptidase M48B family. It depends on Zn(2+) as a cofactor.

Its subcellular location is the cell inner membrane. In Ralstonia nicotianae (strain ATCC BAA-1114 / GMI1000) (Ralstonia solanacearum), this protein is Protease HtpX homolog.